A 138-amino-acid chain; its full sequence is Small ribosomal subunit protein uS11c (138 aa).

The segment at 1–22 (MAKAIPKISSRRNGRIGSRKGA) is disordered. The segment covering 9-22 (SSRRNGRIGSRKGA) has biased composition (basic residues).

The protein belongs to the universal ribosomal protein uS11 family. As to quaternary structure, part of the 30S ribosomal subunit.

Its subcellular location is the plastid. The protein localises to the chloroplast. This is Small ribosomal subunit protein uS11c from Nicotiana tabacum (Common tobacco).